Reading from the N-terminus, the 360-residue chain is Protein DVR-1 (360 aa).

The N-terminal stretch at 1–16 is a signal peptide; the sequence is MVWLRLWAFLHILAIV. Positions 17–246 are excised as a propeptide; the sequence is TLDPELKRRE…LRCKRPRRKR (230 aa). N-linked (GlcNAc...) asparagine glycans are attached at residues Asn-113, Asn-181, and Asn-301. Intrachain disulfides connect Cys-259-Cys-325, Cys-288-Cys-357, and Cys-292-Cys-359.

It belongs to the TGF-beta family. Homodimer. In terms of tissue distribution, vegetal region of the egg.

It is found in the secreted. Its function is as follows. Serves to facilitate the differentiation of either mesoderm or endoderm either as a cofactor in an instructive signal or by providing permissive environment. The polypeptide is Protein DVR-1 (dvr1) (Xenopus laevis (African clawed frog)).